The primary structure comprises 441 residues: Glutamyl-tRNA reductase (441 aa).

Residues 64 to 67, S123, 128 to 130, and Q134 contribute to the substrate site; these read TCNR and ETQ. The Nucleophile role is filled by C65. Residue 203–208 participates in NADP(+) binding; that stretch reads GAGEMI.

It belongs to the glutamyl-tRNA reductase family. In terms of assembly, homodimer.

The enzyme catalyses (S)-4-amino-5-oxopentanoate + tRNA(Glu) + NADP(+) = L-glutamyl-tRNA(Glu) + NADPH + H(+). It functions in the pathway porphyrin-containing compound metabolism; protoporphyrin-IX biosynthesis; 5-aminolevulinate from L-glutamyl-tRNA(Glu): step 1/2. In terms of biological role, catalyzes the NADPH-dependent reduction of glutamyl-tRNA(Glu) to glutamate 1-semialdehyde (GSA). This is Glutamyl-tRNA reductase from Burkholderia pseudomallei (strain K96243).